The sequence spans 1373 residues: Disease resistance protein RRS1 (1373 aa).

The 142-residue stretch at 5–146 folds into the TIR domain; it reads EKDEEFVCIS…EIVRDVYETH (142 aa). Positions 170 to 421 constitute an NB-ARC domain; it reads IGIRCVGIWG…LLEGCGFFPH (252 aa). 179-186 contributes to the ATP binding site; that stretch reads GMPGIGKT. LRR repeat units lie at residues 498-522, 535-553, 554-575, 577-598, 621-646, 665-688, 742-766, 768-793, and 831-854; these read SEEI…AFKN, NPEV…HSLP, NELR…NFDP, HLVE…TKNL, AENL…RLLR, PPNI…TVKP, LPNM…SIQG, PRFL…SLEI, and PRNL…PLSL. The Nuclear localization signal motif lies at 988–1005; that stretch reads RNFHCWAPGKVVPKVRKD. A DNA-binding region (WRKY) is located at residues 1204-1272; sequence IPAIDEGDLW…YLSEHNHPRP (69 aa). The interval 1300-1323 is disordered; sequence RVFQNKDEPNKPHLPSSSTPPGNA.

Interacts with PopP2, a R.solanacearum type III effector.

The protein resides in the nucleus. Functionally, transcription factor. Interacts specifically with the W box (5'-(T)TGAC[CT]-3'), a frequently occurring elicitor-responsive cis-acting element. Also acts as a disease resistance protein involved in resistance to fungal and bacterial pathogens, including R.solanacearum, P.syringae pv. tomato and C.higginsianum. In presence of RPS4, elicites an EDS1-dependent hypersensitive response. This Arabidopsis thaliana (Mouse-ear cress) protein is Disease resistance protein RRS1.